The primary structure comprises 240 residues: Eukaryotic translation initiation factor 3 subunit J (240 aa).

The tract at residues 19-95 (KADVNKWAGE…FANMTPEQQL (77 aa)) is disordered. The segment covering 28 to 45 (EDEDDVKDNWEDDDEEEE) has biased composition (acidic residues). Positions 46 to 56 (KKDAPKQEDTP) are enriched in basic and acidic residues. A compositionally biased stretch (basic residues) spans 60–71 (AKPKKAAQQKKL). Coiled coils occupy residues 63–90 (KKAAQQKKLKKEDLERLQREEEEFANMT) and 176–235 (SNNI…DYDD). Basic and acidic residues predominate over residues 72–81 (KKEDLERLQR).

This sequence belongs to the eIF-3 subunit J family. In terms of assembly, component of the eukaryotic translation initiation factor 3 (eIF-3) complex.

The protein resides in the cytoplasm. Component of the eukaryotic translation initiation factor 3 (eIF-3) complex, which is involved in protein synthesis of a specialized repertoire of mRNAs and, together with other initiation factors, stimulates binding of mRNA and methionyl-tRNAi to the 40S ribosome. The eIF-3 complex specifically targets and initiates translation of a subset of mRNAs involved in cell proliferation. This chain is Eukaryotic translation initiation factor 3 subunit J, found in Anopheles gambiae (African malaria mosquito).